We begin with the raw amino-acid sequence, 322 residues long: Ribosomal RNA small subunit methyltransferase H (322 aa).

S-adenosyl-L-methionine contacts are provided by residues 34–36 (GGH), D59, F86, D112, and Q119.

This sequence belongs to the methyltransferase superfamily. RsmH family.

Its subcellular location is the cytoplasm. The catalysed reaction is cytidine(1402) in 16S rRNA + S-adenosyl-L-methionine = N(4)-methylcytidine(1402) in 16S rRNA + S-adenosyl-L-homocysteine + H(+). Functionally, specifically methylates the N4 position of cytidine in position 1402 (C1402) of 16S rRNA. This Chlorobium limicola (strain DSM 245 / NBRC 103803 / 6330) protein is Ribosomal RNA small subunit methyltransferase H.